Consider the following 401-residue polypeptide: Enolase (401 aa).

Residue Gln154 participates in (2R)-2-phosphoglycerate binding. Glu196 functions as the Proton donor in the catalytic mechanism. 3 residues coordinate Mg(2+): Asp232, Glu275, and Asp302. (2R)-2-phosphoglycerate contacts are provided by Lys327, Arg356, Ser357, and Lys378. The active-site Proton acceptor is the Lys327.

It belongs to the enolase family. Requires Mg(2+) as cofactor.

It is found in the cytoplasm. Its subcellular location is the secreted. The protein localises to the cell surface. It catalyses the reaction (2R)-2-phosphoglycerate = phosphoenolpyruvate + H2O. The protein operates within carbohydrate degradation; glycolysis; pyruvate from D-glyceraldehyde 3-phosphate: step 4/5. Catalyzes the reversible conversion of 2-phosphoglycerate (2-PG) into phosphoenolpyruvate (PEP). It is essential for the degradation of carbohydrates via glycolysis. This chain is Enolase, found in Haloarcula marismortui (strain ATCC 43049 / DSM 3752 / JCM 8966 / VKM B-1809) (Halobacterium marismortui).